A 1249-amino-acid chain; its full sequence is MSTQTRSGGGGGGGGRNKEAGGGSGGGAAGGNNEKSGGSTGAASGAGAGGASATHTVVKAKQPTAEQIRIAQITDIKSGMDDPKIQEKIQSLMETTQRSEEEVCCALQECDSDLDRAVIFLLETLPVGAFATTSKKKKSKSQAAAQKDGEDGGDWETTGPTTVGGASVQLGGINVDLKEQQRRGGNRGGSGNQRSGGPGRGGRAGGYRDGGGDRDRDRDRNGYDKGGEGGGYRNRAGGDGGRMRGGRDGPGGPGRGNYGSRGGRGGGPRLGTRGPGSRDQNRGSRMMNNDHQEIDSWDPVTTPANANDLKPEDCTAFTDTWGDWDNEEYTGTLADTKGYAGAVASTTAPSAGAGAQQQQSQQSTQTGVPPAASNVTELAAPPGLEQQVLNPPPPKDTELVQQYSTTVVSSTATAAVAAGGATGVASVVPQYSDLHAGTPNATTAAQHLRQALDMPPMNTSSSLSAEQSQYFSTLSSQNSNLQPTPSAVGFQQQPPAGVVASQPPTTVVPAVQQQQQPPQPNSVQYPTAFVGATSDATAAAAAAGAPTSYAAAATQQPPVRRQRARVPPPSKIPSSAVEMPGDNMNNIGYLDVQFGGLDFGADDSFDAVVSDKFNSTTGTAGSSTVQQQQQGAQVPPATVGVQPPAPQSQLQQQQQQVVSQAPQQTPKPSNLPGAPGLASSQIMPGQGTTEALSSQNDGLANSYSRTNASGSVSTSVSAGVNSMSNAAAALDQLTKSDPYGQSASTNTALTGGYQNAPYSSTQANKTASYPPTGAPQGYNNMSYSNNQVTNAYPPSTNNYSSYNQGNVNAYQPPSSSVTNNVVPNNNTGNSVGGVSNQSNLPVNNNAVNSSSNNNAGGYLSSQYPVSQTSSAFPSQQNYQNSSQNVYGNTGLNSNTGVASSTVSNSSTNNSNNNVTSSSSLPISSVVSTTTKSSSTTSGTSVVTNLPMVNPYIQAPGLPFYQQAAVYSYEDLQLMQQRMPHVPGFYDINYQTPTSLGAAGVRDANLGSVAYSTMSDGRFTRTDNNSSPVSNVPSSLSQQTGSGGPMLNLPYAYFYGGNMMPASGFQYGTPVYPQQMPTNAATSGGQFQKPAYNTGGYGSATGYDTLGQSGQDYNKNAYQASIVGQQQSKGQTVANQQSGSGSGSDMAPSMYGKNHVAINKVNYDKQSFHSGTPPPYNIAGTQTAGTTSAQPYGQHLAYIPTMATHHNINMHQNMHQDSNSSGQRPQNNNQGKTASKQQGYSASTYWTGPN.

A disordered region spans residues 1–66; sequence MSTQTRSGGG…VVKAKQPTAE (66 aa). Gly residues-rich tracts occupy residues 7–30 and 38–50; these read SGGG…GAAG and GSTG…GAGG. The UBA domain occupies 84-124; sequence KIQEKIQSLMETTQRSEEEVCCALQECDSDLDRAVIFLLET. 10 disordered regions span residues 132 to 312, 350 to 375, 454 to 506, 549 to 579, 616 to 717, 738 to 922, 1016 to 1042, 1124 to 1149, 1164 to 1186, and 1211 to 1249; these read TTSK…LKPE, SAGA…ASNV, MPPM…PPTT, YAAA…AVEM, TTGT…TSVS, PYGQ…SLPI, GRFT…TGSG, QQQS…APSM, KQSF…AGTT, and QNMH…TGPN. The segment covering 186–209 has biased composition (gly residues); sequence NRGGSGNQRSGGPGRGGRAGGYRD. The segment covering 210 to 227 has biased composition (basic and acidic residues); sequence GGGDRDRDRDRNGYDKGG. 2 stretches are compositionally biased toward gly residues: residues 228–240 and 248–269; these read EGGG…GGDG and DGPG…GGPR. Residues 350-369 show a composition bias toward low complexity; the sequence is SAGAGAQQQQSQQSTQTGVP. Residues 457–494 show a composition bias toward polar residues; the sequence is MNTSSSLSAEQSQYFSTLSSQNSNLQPTPSAVGFQQQP. 3 stretches are compositionally biased toward low complexity: residues 549-559, 616-639, and 647-664; these read YAAAATQQPPV, TTGT…PATV, and QSQL…APQQ. Positions 678–705 are enriched in polar residues; the sequence is ASSQIMPGQGTTEALSSQNDGLANSYSR. Over residues 706-717 the composition is skewed to low complexity; the sequence is TNASGSVSTSVS. Polar residues-rich tracts occupy residues 738 to 769 and 777 to 809; these read PYGQ…TASY and GYNN…NVNA. Low complexity predominate over residues 811–861; it reads QPPSSSVTNNVVPNNNTGNSVGGVSNQSNLPVNNNAVNSSSNNNAGGYLSS. A compositionally biased stretch (polar residues) spans 862–873; that stretch reads QYPVSQTSSAFP. Composition is skewed to low complexity over residues 874–884, 892–922, and 1023–1034; these read SQQNYQNSSQN, NSNT…SLPI, and NNSSPVSNVPSS. Positions 1124–1138 are enriched in polar residues; sequence QQQSKGQTVANQQSG. A compositionally biased stretch (polar residues) spans 1216 to 1249; that stretch reads DSNSSGQRPQNNNQGKTASKQQGYSASTYWTGPN.

The protein localises to the cytoplasm. Its function is as follows. Acts in the nervous system to mediate the control of copulatory organs during courtship. The polypeptide is Protein lingerer (Anopheles gambiae (African malaria mosquito)).